The chain runs to 371 residues: uncharacterized protein (371 aa).

The helical transmembrane segment at 17–33 (FLLFSVVLIIVMTTLVF) threads the bilayer.

This sequence to S.pombe SpBC4C3.08 and SpBC4C3.09.

The protein resides in the membrane. This is an uncharacterized protein from Schizosaccharomyces pombe (strain 972 / ATCC 24843) (Fission yeast).